A 224-amino-acid chain; its full sequence is Oxaloacetate tautomerase FAHD2, mitochondrial (224 aa).

The N-terminal 30 residues, 1–30 (MATSMIQRLFKQGTKIVGVGLNYASHAKEL), are a transit peptide targeting the mitochondrion. Glu-67, Glu-69, and Asp-98 together coordinate Mg(2+).

It belongs to the FAH family. It depends on Mg(2+) as a cofactor. The cofactor is Mn(2+).

It localises to the mitochondrion. The enzyme catalyses oxaloacetate = enol-oxaloacetate. Tautomerase that converts enol-oxaloacetate, a strong inhibitor of succinate dehydrogenase, to the physiological keto form of oxaloacetate. This is Oxaloacetate tautomerase FAHD2, mitochondrial from Arabidopsis thaliana (Mouse-ear cress).